The following is a 289-amino-acid chain: ATP synthase gamma chain (289 aa).

The protein belongs to the ATPase gamma chain family. In terms of assembly, F-type ATPases have 2 components, CF(1) - the catalytic core - and CF(0) - the membrane proton channel. CF(1) has five subunits: alpha(3), beta(3), gamma(1), delta(1), epsilon(1). CF(0) has three main subunits: a, b and c.

The protein resides in the cell inner membrane. Functionally, produces ATP from ADP in the presence of a proton gradient across the membrane. The gamma chain is believed to be important in regulating ATPase activity and the flow of protons through the CF(0) complex. The chain is ATP synthase gamma chain from Histophilus somni (strain 129Pt) (Haemophilus somnus).